The sequence spans 110 residues: Small ribosomal subunit protein uS10 (110 aa).

The protein belongs to the universal ribosomal protein uS10 family. In terms of assembly, part of the 30S ribosomal subunit.

In terms of biological role, involved in the binding of tRNA to the ribosomes. This Ehrlichia ruminantium (strain Gardel) protein is Small ribosomal subunit protein uS10.